A 476-amino-acid polypeptide reads, in one-letter code: MIQVLLVTICLAAFPYQGSSIILESGNVNDYEVVYARKVTELPKGAVQQKYEDAMQYEFKVNGEPVVLHLEKNKGLFSEDYSETHYSPDGRQIITYPPFEDHCYYHGRIENDADSTASISACNGLKGHFKLQGETYLIEPLKLPDSEAHAVYKYENVEKEDEAPKMCGVTETNWESYEPIEKASQSNLTPEQQKFSPRYIELAVVADHGMFTKYNSNLNTIRTRVHEMVNTLNGFFRSVNVDASLANLEVWSKKDLIKVEKDSSKTLTSFGEWRERDLLPRISHDHAQLLTTIVFDQQTIGLAYTAGMCDPRQSVAVVMDHSKKNLRVAVTMAHELGHNLGMDHDDTCTCGAKSCIMASTISKGLSFEFSKCSQNQYQTYLTDHNPQCILNKPLTTVSGNELLEAGEECDCGAPENPCCDAATCKLRPRAQCAEGLCCDQCRFKGAGKICRRARGDNPDDRCTGQSADCPRNRFHA.

The signal sequence occupies residues 1 to 20; sequence MIQVLLVTICLAAFPYQGSS. Residues 21–192 constitute a propeptide that is removed on maturation; it reads IILESGNVND…ASQSNLTPEQ (172 aa). The residue at position 193 (Gln-193) is a Pyrrolidone carboxylic acid. A Peptidase M12B domain is found at 198 to 393; that stretch reads RYIELAVVAD…HNPQCILNKP (196 aa). Glu-201 and Asp-285 together coordinate Ca(2+). Disulfide bonds link Cys-309–Cys-388, Cys-348–Cys-372, and Cys-350–Cys-355. His-334 serves as a coordination point for Zn(2+). The active site involves Glu-335. Residues His-338 and His-344 each contribute to the Zn(2+) site. Ca(2+) contacts are provided by Cys-388 and Asn-391. Positions 394–403 are excised as a propeptide; it reads LTTVSGNELL. The Disintegrin domain maps to 395–476; it reads TTVSGNELLE…ADCPRNRFHA (82 aa). Cystine bridges form between Cys-409–Cys-424, Cys-411–Cys-419, Cys-418–Cys-441, Cys-432–Cys-438, Cys-437–Cys-462, and Cys-450–Cys-469. A Cell attachment site motif is present at residues 454 to 456; the sequence is RGD.

It belongs to the venom metalloproteinase (M12B) family. P-II subfamily. P-IIa sub-subfamily. As to quaternary structure, monomer (metalloprotease). It depends on Zn(2+) as a cofactor. The N-terminus is blocked. Post-translationally, not glycosylated. Expressed by the venom gland.

The protein resides in the secreted. Inhibited by EDTA, and 1,10-phenanthroline, but not by PMSF. In terms of biological role, non-hemorrhagic proteinase that activates prothrombin (F2) calcium-independently. Activates factor X (F10) and hydrolyzes the Aalpha-chain and more slowly the Bbeta-chain of fibrin and fibrinogen without affecting the gamma chain. It induces neither detachment nor apoptosis of human endothelial cells and is also not able to trigger an endothelial pro-inflammatory cell response. Nitric oxide and prostacyclin levels released by endothelial cells are significantly increased after treatment with insularinase A. Functionally, inhibits ADP-induced platelet aggregation (IC(50)=0.8 uM for native protein). Interestingly, inhibits the adhesion of HUVECs to immobilized fibrinogen at very low concentrations (IC(50)=36 nM). This is Zinc metalloproteinase/disintegrin from Bothrops insularis (Golden lancehead).